Reading from the N-terminus, the 499-residue chain is L-arabinose isomerase (499 aa).

Mn(2+) contacts are provided by E306, E333, H350, and H449.

The protein belongs to the arabinose isomerase family. It depends on Mn(2+) as a cofactor.

It catalyses the reaction beta-L-arabinopyranose = L-ribulose. It functions in the pathway carbohydrate degradation; L-arabinose degradation via L-ribulose; D-xylulose 5-phosphate from L-arabinose (bacterial route): step 1/3. In terms of biological role, catalyzes the conversion of L-arabinose to L-ribulose. The sequence is that of L-arabinose isomerase from Tolumonas auensis (strain DSM 9187 / NBRC 110442 / TA 4).